The sequence spans 199 residues: 5'-deoxynucleotidase YfbR (199 aa).

Substrate is bound by residues R18–W19 and H33. Residues V30–Y142 enclose the HD domain. A divalent metal cation-binding residues include H33, H68, and D69. Residues D69, D77–T80, and D137 contribute to the substrate site. D137 contacts a divalent metal cation.

It belongs to the 5DNU family. In terms of assembly, homodimer. The cofactor is a divalent metal cation.

The protein resides in the cytoplasm. It catalyses the reaction a 2'-deoxyribonucleoside 5'-phosphate + H2O = a 2'-deoxyribonucleoside + phosphate. Its function is as follows. Catalyzes the strictly specific dephosphorylation of 2'-deoxyribonucleoside 5'-monophosphates. In Shigella flexneri serotype 5b (strain 8401), this protein is 5'-deoxynucleotidase YfbR.